The chain runs to 354 residues: UPF0597 protein PPA0217 (354 aa).

It belongs to the UPF0597 family.

The sequence is that of UPF0597 protein PPA0217 from Cutibacterium acnes (strain DSM 16379 / KPA171202) (Propionibacterium acnes).